Reading from the N-terminus, the 431-residue chain is uncharacterized protein (431 aa).

This is an uncharacterized protein from Acanthamoeba polyphaga mimivirus (APMV).